The sequence spans 253 residues: MKALHLQHRSPTSYRVKARASYVDETLFGSPARTRPAQPDFDPPWVQNCNRSRGVGPGPPKGSLAKRDCESPSSRGSTPNLTPRKKNKYRLIGHAPSYCDESLFGTSKEGSRMAVGDAAKLRTLFWTPPATPRGSHTPCPRETPLRAIHPAGPSRTEPRVTAGSQMSSQDGLCVPCSLGQRRSHSLTHLTVPSTGHPASSAPQTNGPWSPRPNTSGATVQSPLVTSKACSGRVSGPAPPRRGACPPKPKPPWK.

Disordered stretches follow at residues 30 to 89 (SPAR…KNKY), 127 to 175 (TPPA…LCVP), and 188 to 253 (HLTV…PPWK). Positions 71-81 (SPSSRGSTPNL) are enriched in polar residues. The Nuclear localization signal signature appears at 81 to 97 (LTPRKKNKYRLIGHAPS). The segment at 112 to 140 (RMAVGDAAKLRTLFWTPPATPRGSHTPCP) is interaction with RBPJ/RBPSUH. Residues 140 to 253 (PRETPLRAIH…CPPKPKPPWK (114 aa)) form an interaction with tubulin region. The segment covering 188–228 (HLTVPSTGHPASSAPQTNGPWSPRPNTSGATVQSPLVTSKA) has biased composition (polar residues).

Belongs to the RITA family. In terms of assembly, interacts with RBPJ/RBPSUH.

It is found in the cytoplasm. It localises to the nucleus. The protein resides in the cytoskeleton. The protein localises to the microtubule organizing center. Its subcellular location is the centrosome. Its function is as follows. Tubulin-binding protein that acts as a negative regulator of Notch signaling pathway. Shuttles between the cytoplasm and the nucleus and mediates the nuclear export of RBPJ/RBPSUH, thereby preventing the interaction between RBPJ/RBPSUH and NICD product of Notch proteins (Notch intracellular domain), leading to down-regulate Notch-mediated transcription. May play a role in neurogenesis. The sequence is that of RBPJ-interacting and tubulin-associated protein 1 (Rita1) from Mus musculus (Mouse).